Here is a 57-residue protein sequence, read N- to C-terminus: High light-inducible protein HliD (57 aa).

Positions 25 to 30 match the Chlorophyll-binding motif motif; it reads EKLNGR. The chain crosses the membrane as a helical span at residues 25-46; sequence EKLNGRAAMVGFLLILVIEYFT.

This sequence belongs to the Hlip family. Probably forms dimers which bind 6 chlorophyll a and 2 beta-carotenoid molecules. Cofractionates in an approximately 50 kDa fraction of the thylakoid membrane with HliC. Does not associate with mature PSII. Purified in several chlorophyll- and carotenoid-containing complexes, including photosystem II (PSII) assembly intermediate complex RCII* (iD1, D1, D2, PsbE, PsbF, PsbI, Ycf39, Ycf48, HliC and HliD) and the Ycf39-Hlip complex (Ycf39, HliC, HliD and pigments).

The protein localises to the cellular thylakoid membrane. In terms of biological role, involved in photosystem II (PSII) assembly and/or repair under high light stress. Required for binding of chlorophyll and carotenoids by the Ycf39-Hlip complex. The Ycf39-Hlip complex binds D1 at an early stage of PSII assembly along with Ycf48, ribosomes and ChlG, the last enzyme in chlorophyll biosynthesis; it may be involved in chlorophyll reuse and delivery to D1 in the initial stages of PSII assembly. Binds chlorophyll a and beta-carotenoid in a 3:1 stoichiometry in the presence and absence of Yfc39; in the Ycf39-HliC-HliD complex, HliD binds all the pigment. The Ycf39-Hlip complex efficiently quenches chlorophyll fluorescence, contributing to photoprotection. Deletion of 4 to 5 members of the Hlip family suggests the proteins are involved in regulation of chlorophyll biosynthesis, in stabilization of chlorophyll-binding proteins and/or in reuse of chlorophylls, and may regulate tetrapyrrole biosynthesis. Might bind chlorophyll and/or carotenoids in association with HliC (called the ScpBE pair). Its function is as follows. The Hlips might regulate tetrapyrrole biosynthesis, maybe at the level of aminolevulinic acid synthesis and probably stabilize PSII assembly intermediates. This is High light-inducible protein HliD (hliD) from Synechocystis sp. (strain ATCC 27184 / PCC 6803 / Kazusa).